A 140-amino-acid chain; its full sequence is Nucleoside diphosphate kinase (140 aa).

ATP-binding residues include lysine 9, phenylalanine 57, arginine 85, threonine 91, arginine 102, and asparagine 112. Histidine 115 acts as the Pros-phosphohistidine intermediate in catalysis.

Belongs to the NDK family. Homotetramer. The cofactor is Mg(2+).

It is found in the cytoplasm. It carries out the reaction a 2'-deoxyribonucleoside 5'-diphosphate + ATP = a 2'-deoxyribonucleoside 5'-triphosphate + ADP. The catalysed reaction is a ribonucleoside 5'-diphosphate + ATP = a ribonucleoside 5'-triphosphate + ADP. In terms of biological role, major role in the synthesis of nucleoside triphosphates other than ATP. The ATP gamma phosphate is transferred to the NDP beta phosphate via a ping-pong mechanism, using a phosphorylated active-site intermediate. In Chlorobaculum tepidum (strain ATCC 49652 / DSM 12025 / NBRC 103806 / TLS) (Chlorobium tepidum), this protein is Nucleoside diphosphate kinase.